Here is a 72-residue protein sequence, read N- to C-terminus: Translational regulator CsrA (72 aa).

The protein belongs to the CsrA/RsmA family. Homodimer; the beta-strands of each monomer intercalate to form a hydrophobic core, while the alpha-helices form wings that extend away from the core.

The protein resides in the cytoplasm. A translational regulator that binds mRNA to regulate translation initiation and/or mRNA stability. Usually binds in the 5'-UTR at or near the Shine-Dalgarno sequence preventing ribosome-binding, thus repressing translation. Its main target seems to be the major flagellin gene, while its function is anatagonized by FliW. The sequence is that of Translational regulator CsrA from Clostridium botulinum (strain Okra / Type B1).